A 197-amino-acid chain; its full sequence is dITP/XTP pyrophosphatase (197 aa).

8–13 (TGNPGK) serves as a coordination point for substrate. Positions 40 and 69 each coordinate Mg(2+). Residue D69 is the Proton acceptor of the active site. Substrate is bound by residues S70, 154–157 (FGYD), K177, and 182–183 (HR).

Belongs to the HAM1 NTPase family. As to quaternary structure, homodimer. It depends on Mg(2+) as a cofactor.

It carries out the reaction XTP + H2O = XMP + diphosphate + H(+). The catalysed reaction is dITP + H2O = dIMP + diphosphate + H(+). It catalyses the reaction ITP + H2O = IMP + diphosphate + H(+). Its function is as follows. Pyrophosphatase that catalyzes the hydrolysis of nucleoside triphosphates to their monophosphate derivatives, with a high preference for the non-canonical purine nucleotides XTP (xanthosine triphosphate), dITP (deoxyinosine triphosphate) and ITP. Seems to function as a house-cleaning enzyme that removes non-canonical purine nucleotides from the nucleotide pool, thus preventing their incorporation into DNA/RNA and avoiding chromosomal lesions. This chain is dITP/XTP pyrophosphatase, found in Yersinia pestis.